The chain runs to 464 residues: Soluble pyridine nucleotide transhydrogenase (464 aa).

Residue 35–44 (DSRRQVGGNC) coordinates FAD.

The protein belongs to the class-I pyridine nucleotide-disulfide oxidoreductase family. It depends on FAD as a cofactor.

The protein resides in the cytoplasm. The catalysed reaction is NAD(+) + NADPH = NADH + NADP(+). Its function is as follows. Conversion of NADPH, generated by peripheral catabolic pathways, to NADH, which can enter the respiratory chain for energy generation. This Pseudomonas syringae pv. syringae (strain B728a) protein is Soluble pyridine nucleotide transhydrogenase.